Here is a 203-residue protein sequence, read N- to C-terminus: Nucleoside triphosphate pyrophosphatase (203 aa).

Asp78 functions as the Proton acceptor in the catalytic mechanism.

Belongs to the Maf family. The cofactor is a divalent metal cation.

It localises to the cytoplasm. It catalyses the reaction a ribonucleoside 5'-triphosphate + H2O = a ribonucleoside 5'-phosphate + diphosphate + H(+). It carries out the reaction a 2'-deoxyribonucleoside 5'-triphosphate + H2O = a 2'-deoxyribonucleoside 5'-phosphate + diphosphate + H(+). Functionally, nucleoside triphosphate pyrophosphatase. May have a dual role in cell division arrest and in preventing the incorporation of modified nucleotides into cellular nucleic acids. The sequence is that of Nucleoside triphosphate pyrophosphatase from Prochlorococcus marinus (strain MIT 9301).